A 336-amino-acid polypeptide reads, in one-letter code: Biotin synthase (336 aa).

Residues 51-270 (NQVQCNQLLN…IALARIMMPK (220 aa)) enclose the Radical SAM core domain. The [4Fe-4S] cluster site is built by Cys66, Cys70, and Cys73. [2Fe-2S] cluster-binding residues include Cys110, Cys141, Cys201, and Arg274.

This sequence belongs to the radical SAM superfamily. Biotin synthase family. As to quaternary structure, homodimer. It depends on [4Fe-4S] cluster as a cofactor. [2Fe-2S] cluster serves as cofactor.

It catalyses the reaction (4R,5S)-dethiobiotin + (sulfur carrier)-SH + 2 reduced [2Fe-2S]-[ferredoxin] + 2 S-adenosyl-L-methionine = (sulfur carrier)-H + biotin + 2 5'-deoxyadenosine + 2 L-methionine + 2 oxidized [2Fe-2S]-[ferredoxin]. It participates in cofactor biosynthesis; biotin biosynthesis; biotin from 7,8-diaminononanoate: step 2/2. In terms of biological role, catalyzes the conversion of dethiobiotin (DTB) to biotin by the insertion of a sulfur atom into dethiobiotin via a radical-based mechanism. The protein is Biotin synthase of Rhodopseudomonas palustris (strain ATCC BAA-98 / CGA009).